The sequence spans 265 residues: HUWE1-associated protein modifying stress responses (265 aa).

Disordered stretches follow at residues 1–22 (MEDK…HWFS), 145–170 (RNSR…GSSV), 195–218 (VRSS…RRNG), and 240–265 (GTRK…NRMI). Composition is skewed to polar residues over residues 156-170 (VSPN…GSSV) and 195-212 (VRSS…SSNT).

This sequence belongs to the HAPSTR1 family. In terms of assembly, oligomer.

Its subcellular location is the nucleus. It is found in the cytoplasm. Its function is as follows. Acts as a central player within a network of stress response pathways promoting cellular adaptability. Functions as a negative regulator of TP53/P53 in the cellular response to telomere erosion and probably also DNA damage. This Xenopus tropicalis (Western clawed frog) protein is HUWE1-associated protein modifying stress responses.